We begin with the raw amino-acid sequence, 116 residues long: Large ribosomal subunit protein bL20 (116 aa).

This sequence belongs to the bacterial ribosomal protein bL20 family.

Binds directly to 23S ribosomal RNA and is necessary for the in vitro assembly process of the 50S ribosomal subunit. It is not involved in the protein synthesizing functions of that subunit. This is Large ribosomal subunit protein bL20 from Nitratiruptor sp. (strain SB155-2).